We begin with the raw amino-acid sequence, 608 residues long: Elongation factor 4 (608 aa).

Residues 11 to 193 (DRIRNFSIIA…QIVQKIPAPS (183 aa)) enclose the tr-type G domain. Residues 23 to 28 (DHGKST) and 140 to 143 (NKID) each bind GTP.

Belongs to the TRAFAC class translation factor GTPase superfamily. Classic translation factor GTPase family. LepA subfamily.

Its subcellular location is the cell membrane. It catalyses the reaction GTP + H2O = GDP + phosphate + H(+). Functionally, required for accurate and efficient protein synthesis under certain stress conditions. May act as a fidelity factor of the translation reaction, by catalyzing a one-codon backward translocation of tRNAs on improperly translocated ribosomes. Back-translocation proceeds from a post-translocation (POST) complex to a pre-translocation (PRE) complex, thus giving elongation factor G a second chance to translocate the tRNAs correctly. Binds to ribosomes in a GTP-dependent manner. In Anoxybacillus flavithermus (strain DSM 21510 / WK1), this protein is Elongation factor 4.